The primary structure comprises 451 residues: Trigger factor (451 aa).

The PPIase FKBP-type domain occupies 165–250 (DDKLTIDFEG…LHQIQAREML (86 aa)).

Belongs to the FKBP-type PPIase family. Tig subfamily.

It is found in the cytoplasm. It catalyses the reaction [protein]-peptidylproline (omega=180) = [protein]-peptidylproline (omega=0). In terms of biological role, involved in protein export. Acts as a chaperone by maintaining the newly synthesized protein in an open conformation. Functions as a peptidyl-prolyl cis-trans isomerase. This is Trigger factor (tig) from Helicobacter pylori (strain ATCC 700392 / 26695) (Campylobacter pylori).